Here is a 354-residue protein sequence, read N- to C-terminus: Protein-glutamate methylesterase/protein-glutamine glutaminase (354 aa).

Residues 7-124 (KVLCVDDSAL…REGMLEYTEM (118 aa)) enclose the Response regulatory domain. A 4-aspartylphosphate modification is found at Asp-58. Positions 156-348 (LLSSEKVIII…AALMKRAEAS (193 aa)) constitute a CheB-type methylesterase domain. Residues Ser-168, His-194, and Asp-290 contribute to the active site.

Belongs to the CheB family. Post-translationally, phosphorylated by CheA. Phosphorylation of the N-terminal regulatory domain activates the methylesterase activity.

Its subcellular location is the cytoplasm. The catalysed reaction is [protein]-L-glutamate 5-O-methyl ester + H2O = L-glutamyl-[protein] + methanol + H(+). The enzyme catalyses L-glutaminyl-[protein] + H2O = L-glutamyl-[protein] + NH4(+). Its function is as follows. Involved in chemotaxis. Part of a chemotaxis signal transduction system that modulates chemotaxis in response to various stimuli. Catalyzes the demethylation of specific methylglutamate residues introduced into the chemoreceptors (methyl-accepting chemotaxis proteins or MCP) by CheR. Also mediates the irreversible deamidation of specific glutamine residues to glutamic acid. The protein is Protein-glutamate methylesterase/protein-glutamine glutaminase of Chromohalobacter salexigens (strain ATCC BAA-138 / DSM 3043 / CIP 106854 / NCIMB 13768 / 1H11).